The chain runs to 407 residues: Phosphopentomutase (407 aa).

Residues aspartate 10, aspartate 306, histidine 311, aspartate 347, histidine 348, and histidine 359 each coordinate Mn(2+).

Belongs to the phosphopentomutase family. It depends on Mn(2+) as a cofactor.

The protein localises to the cytoplasm. The catalysed reaction is 2-deoxy-alpha-D-ribose 1-phosphate = 2-deoxy-D-ribose 5-phosphate. The enzyme catalyses alpha-D-ribose 1-phosphate = D-ribose 5-phosphate. It functions in the pathway carbohydrate degradation; 2-deoxy-D-ribose 1-phosphate degradation; D-glyceraldehyde 3-phosphate and acetaldehyde from 2-deoxy-alpha-D-ribose 1-phosphate: step 1/2. In terms of biological role, isomerase that catalyzes the conversion of deoxy-ribose 1-phosphate (dRib-1-P) and ribose 1-phosphate (Rib-1-P) to deoxy-ribose 5-phosphate (dRib-5-P) and ribose 5-phosphate (Rib-5-P), respectively. The polypeptide is Phosphopentomutase (Buchnera aphidicola subsp. Acyrthosiphon pisum (strain Tuc7)).